Here is a 552-residue protein sequence, read N- to C-terminus: CTP synthase (552 aa).

Positions 1–270 (MTKYVFVTGG…DRIICEELKL (270 aa)) are amidoligase domain. A CTP-binding site is contributed by Ser-13. Residue Ser-13 participates in UTP binding. ATP-binding positions include 14–19 (SLGKGI) and Asp-71. Mg(2+) is bound by residues Asp-71 and Glu-144. CTP is bound by residues 151–153 (DIE), 191–196 (KTKPTQ), and Lys-227. UTP contacts are provided by residues 191 to 196 (KTKPTQ) and Lys-227. The region spanning 295–547 (TIGMVGKYVD…VEAALANKQA (253 aa)) is the Glutamine amidotransferase type-1 domain. Residue Gly-356 participates in L-glutamine binding. Cys-383 functions as the Nucleophile; for glutamine hydrolysis in the catalytic mechanism. L-glutamine-binding positions include 384-387 (LGMQ), Glu-407, and Arg-473. Residues His-520 and Glu-522 contribute to the active site.

The protein belongs to the CTP synthase family. Homotetramer.

It carries out the reaction UTP + L-glutamine + ATP + H2O = CTP + L-glutamate + ADP + phosphate + 2 H(+). It catalyses the reaction L-glutamine + H2O = L-glutamate + NH4(+). The catalysed reaction is UTP + NH4(+) + ATP = CTP + ADP + phosphate + 2 H(+). Its pathway is pyrimidine metabolism; CTP biosynthesis via de novo pathway; CTP from UDP: step 2/2. With respect to regulation, allosterically activated by GTP, when glutamine is the substrate; GTP has no effect on the reaction when ammonia is the substrate. The allosteric effector GTP functions by stabilizing the protein conformation that binds the tetrahedral intermediate(s) formed during glutamine hydrolysis. Inhibited by the product CTP, via allosteric rather than competitive inhibition. In terms of biological role, catalyzes the ATP-dependent amination of UTP to CTP with either L-glutamine or ammonia as the source of nitrogen. Regulates intracellular CTP levels through interactions with the four ribonucleotide triphosphates. This Burkholderia ambifaria (strain MC40-6) protein is CTP synthase.